The primary structure comprises 167 residues: MAILNILHYPDPRLRRKAQPVAAVDKSIKKLADDMLETMYQAPGIGLAAVQVNVPKQVVVIDISEDKSSPLVLINPEIVARQGKAESEEGCLSVPEIFEPVTRAAEITVHYLDREGQKQELQTQELLATCIQHELDHLEGKLFIDYFSTLKRQRIRKKAEKRQRLSA.

2 residues coordinate Fe cation: Cys91 and His133. Residue Glu134 is part of the active site. Residue His137 participates in Fe cation binding.

The protein belongs to the polypeptide deformylase family. Requires Fe(2+) as cofactor.

It catalyses the reaction N-terminal N-formyl-L-methionyl-[peptide] + H2O = N-terminal L-methionyl-[peptide] + formate. In terms of biological role, removes the formyl group from the N-terminal Met of newly synthesized proteins. Requires at least a dipeptide for an efficient rate of reaction. N-terminal L-methionine is a prerequisite for activity but the enzyme has broad specificity at other positions. This chain is Peptide deformylase, found in Nitrosococcus oceani (strain ATCC 19707 / BCRC 17464 / JCM 30415 / NCIMB 11848 / C-107).